Here is a 219-residue protein sequence, read N- to C-terminus: PKHD-type hydroxylase Mmar10_1675 (219 aa).

Residues 77–171 enclose the Fe2OG dioxygenase domain; that stretch reads TLSRILVSRY…RVAVVGWVRS (95 aa). His95, Asp97, and His152 together coordinate Fe cation. Arg162 is a binding site for 2-oxoglutarate.

Fe(2+) is required as a cofactor. It depends on L-ascorbate as a cofactor.

The chain is PKHD-type hydroxylase Mmar10_1675 from Maricaulis maris (strain MCS10) (Caulobacter maris).